The sequence spans 200 residues: NADH-quinone oxidoreductase subunit C (200 aa).

The protein belongs to the complex I 30 kDa subunit family. In terms of assembly, NDH-1 is composed of 14 different subunits. Subunits NuoB, C, D, E, F, and G constitute the peripheral sector of the complex.

It is found in the cell inner membrane. It carries out the reaction a quinone + NADH + 5 H(+)(in) = a quinol + NAD(+) + 4 H(+)(out). NDH-1 shuttles electrons from NADH, via FMN and iron-sulfur (Fe-S) centers, to quinones in the respiratory chain. The immediate electron acceptor for the enzyme in this species is believed to be ubiquinone. Couples the redox reaction to proton translocation (for every two electrons transferred, four hydrogen ions are translocated across the cytoplasmic membrane), and thus conserves the redox energy in a proton gradient. In Burkholderia thailandensis (strain ATCC 700388 / DSM 13276 / CCUG 48851 / CIP 106301 / E264), this protein is NADH-quinone oxidoreductase subunit C.